Reading from the N-terminus, the 939-residue chain is Aconitate hydratase A (939 aa).

The interval 433-453 (GSGESLATGAEGRPSKPVTVA) is disordered. [4Fe-4S] cluster is bound by residues C475, C541, and C544.

The protein belongs to the aconitase/IPM isomerase family. As to quaternary structure, monomer. [4Fe-4S] cluster is required as a cofactor.

The enzyme catalyses citrate = D-threo-isocitrate. It catalyses the reaction (2S,3R)-3-hydroxybutane-1,2,3-tricarboxylate = 2-methyl-cis-aconitate + H2O. Its pathway is carbohydrate metabolism; tricarboxylic acid cycle; isocitrate from oxaloacetate: step 2/2. It functions in the pathway organic acid metabolism; propanoate degradation. Its function is as follows. Involved in the catabolism of short chain fatty acids (SCFA) via the tricarboxylic acid (TCA)(acetyl degradation route) and probably via the 2-methylcitrate cycle I (propionate degradation route). Catalyzes the reversible isomerization of citrate to isocitrate via cis-aconitate. Could catalyze the hydration of 2-methyl-cis-aconitate to yield (2R,3S)-2-methylisocitrate. The apo form of AcnA functions as a RNA-binding regulatory protein. This Corynebacterium glutamicum (strain ATCC 13032 / DSM 20300 / JCM 1318 / BCRC 11384 / CCUG 27702 / LMG 3730 / NBRC 12168 / NCIMB 10025 / NRRL B-2784 / 534) protein is Aconitate hydratase A (acn).